The primary structure comprises 331 residues: Myc-associated zinc finger protein (331 aa).

2 disordered regions span residues 46 to 65 (AQSP…APAA) and 108 to 131 (TVDT…SAPA). Residues 117 to 127 (PPAPPPPPPAV) are compositionally biased toward pro residues. 4 consecutive C2H2-type zinc fingers follow at residues 177-199 (YICA…EAIH), 266-288 (HACE…KLSH), 294-316 (YQCP…VRSH), and 324-331 (YNCSHCGK).

As to quaternary structure, interacts with BPTF. Ubiquitously expressed.

Its subcellular location is the nucleus. Transcriptional regulator. Acts as a transcriptional activator that binds to purine-rich GAGA sites found in the promoter of many genes including insulin I and II and islet amyloid polypeptide. This chain is Myc-associated zinc finger protein (MAZ), found in Mesocricetus auratus (Golden hamster).